Here is a 103-residue protein sequence, read N- to C-terminus: Large ribosomal subunit protein bL21 (103 aa).

This sequence belongs to the bacterial ribosomal protein bL21 family. In terms of assembly, part of the 50S ribosomal subunit. Contacts protein L20.

This protein binds to 23S rRNA in the presence of protein L20. The protein is Large ribosomal subunit protein bL21 of Paracidovorax citrulli (strain AAC00-1) (Acidovorax citrulli).